We begin with the raw amino-acid sequence, 97 residues long: Defensin alpha 4 (97 aa).

The N-terminal stretch at 1–19 is a signal peptide; that stretch reads MRIIAILAAILLVALQVRA. Residues 20-63 constitute a propeptide that is removed on maturation; that stretch reads GPLQARGDEAPGQEQRGPEDQDISISFAWDKSSALQVSGSTRGM. 3 cysteine pairs are disulfide-bonded: Cys-65/Cys-93, Cys-67/Cys-82, and Cys-72/Cys-92. Residue Asp-97 is a propeptide.

Belongs to the alpha-defensin family. As to quaternary structure, homodimer; homodimerization seems to be required for killing S.aureus, but not E.coli. Interacts with CD4. Interacts with Bacillus anthracis lef; homodimerization is required for the interaction. The three-dimensional structure formed by the three intramolecular disulfide bridges is indispensable for effective bacterial killing.

The protein resides in the secreted. Its subcellular location is the cytoplasmic vesicle. It is found in the secretory vesicle. Its function is as follows. Host-defense peptide that has antimicrobial activity against Gram-negative bacteria, and to a lesser extent also against Gram-positive bacteria and fungi. Exhibits antimicrobial activity against Gram-negative E.coli and E.aerogenes and Gram-positive S.faecalis, S.aureus and B.cereus and the yeast C.albicans (in vitro). Inhibits corticotropin (ACTH)-stimulated corticosterone production (in vitro). Inhibits enzymatic activity of B.anthracis lef/anthrax lethal factor (in vitro). The sequence is that of Defensin alpha 4 (DEFA4) from Pan troglodytes (Chimpanzee).